Consider the following 307-residue polypeptide: Homoserine O-acetyltransferase (307 aa).

The active-site Acyl-thioester intermediate is cysteine 142. The substrate site is built by lysine 163 and serine 192. Catalysis depends on histidine 235, which acts as the Proton acceptor. Glutamate 237 is an active-site residue. Arginine 249 is a binding site for substrate.

Belongs to the MetA family.

The protein resides in the cytoplasm. The enzyme catalyses L-homoserine + acetyl-CoA = O-acetyl-L-homoserine + CoA. The protein operates within amino-acid biosynthesis; L-methionine biosynthesis via de novo pathway; O-acetyl-L-homoserine from L-homoserine: step 1/1. In terms of biological role, transfers an acetyl group from acetyl-CoA to L-homoserine, forming acetyl-L-homoserine. In Desulfitobacterium hafniense (strain DSM 10664 / DCB-2), this protein is Homoserine O-acetyltransferase.